A 246-amino-acid chain; its full sequence is Transcription factor MYB13 (246 aa).

HTH myb-type domains are found at residues 9–61 and 62–116; these read KIGL…INYL and RPDI…KKRL. 2 DNA-binding regions (H-T-H motif) span residues 37 to 61 and 89 to 112; these read WRALPKLAGLLRCGKSCRLRWINYL and WSAIAAKLPGRTDNEIKNVWHTHL.

As to expression, expressed in roots and flowers. Expressed in shoot apex, axillary buds, at the basis of flowers and branching points of inflorescences.

It localises to the nucleus. Functionally, plays a regulatory role in meristem function. Functions as component of a regulatory network controlling the establishment and/or development of the shoot system by the regulation of apical meristem function. May play a role in tolerance to boric acid. The protein is Transcription factor MYB13 of Arabidopsis thaliana (Mouse-ear cress).